The following is a 563-amino-acid chain: Putative cysteine ligase BshC (563 aa).

Positions 493–518 (KEKTYRAGRRKHDELLQQLDKAELNL) form a coiled coil.

It belongs to the BshC family.

In Chlorobaculum tepidum (strain ATCC 49652 / DSM 12025 / NBRC 103806 / TLS) (Chlorobium tepidum), this protein is Putative cysteine ligase BshC.